The chain runs to 173 residues: MEVILIKPVRKLGKIGEIHKVADGFGRNYLLPQKLAIRATELNKELIVKQKHELEEKDKQIKSEITKINDLIKDQKLIFVRQTSDDGKLFGSVNNKEIAEKLSQAVSYPISHLNIILDTQIKSTGIYKVEVRLHAELSTEVTVIVARSESEIQDYLREQKTEKSTTEPLAESA.

It belongs to the bacterial ribosomal protein bL9 family.

In terms of biological role, binds to the 23S rRNA. In Rickettsia bellii (strain RML369-C), this protein is Large ribosomal subunit protein bL9.